Reading from the N-terminus, the 185-residue chain is Coiled-coil domain-containing protein 32 (185 aa).

The stretch at 78–98 forms a coiled coil; it reads LASLEKKLRRIKGLNQEVTSK. The tract at residues 159-185 is disordered; the sequence is IPPESQVEKPVAEDEPAAGDKPAAAEQ.

As to quaternary structure, interacts with AP2S1; the interaction is direct and mediates association with adaptor protein complex 2 (AP-2).

Its subcellular location is the membrane. It is found in the coated pit. Its function is as follows. Regulates clathrin-mediated endocytsois of cargos such as transferrin probably through the association and modulation of adaptor protein complex 2 (AP-2). Has a role in ciliogenesis. Required for proper cephalic and left/right axis development. The sequence is that of Coiled-coil domain-containing protein 32 from Homo sapiens (Human).